Consider the following 743-residue polypeptide: Amylovoran biosynthesis protein AmsF (743 aa).

The signal sequence occupies residues 1–27; the sequence is MKRRELIRTAFSTIVATAALSSVSARA.

It to R.meliloti ExoP.

The protein localises to the periplasm. It functions in the pathway glycan metabolism; exopolysaccharide biosynthesis. Involved in the biosynthesis of amylovoran which functions as a virulence factor. May be involved in the polymerization or late modification of the repeating units. The polypeptide is Amylovoran biosynthesis protein AmsF (amsF) (Erwinia amylovora (Fire blight bacteria)).